Here is a 290-residue protein sequence, read N- to C-terminus: RxLR effector protein Avr4 (290 aa).

Positions 1–24 are cleaved as a signal peptide; sequence MRSLHILLVITASLLASLAVSAEA. A disordered region spans residues 33–56; the sequence is VVENNKDKSRFLRDGGTTEAQTDE. Positions 36 to 45 are enriched in basic and acidic residues; that stretch reads NNKDKSRFLR. A RxLR-dEER motif is present at residues 42 to 58; the sequence is RFLRDGGTTEAQTDEER. Positions 118-141 are W1 motif; sequence KYERMQWQKLNEGQTLTYMRVGDR. Residues 151 to 174 form a W2 motif region; sequence QLLRWVAQKKTVKSVYDDLQIEGF. Residues 224-247 are W3 motif; sequence VFEKWAMEGTHIKSVIKTLNLNNK. Asparagine 246 carries N-linked (GlcNAc...) asparagine glycosylation. Residues 249–270 are y motif; that stretch reads ASEMANNENFPALLKYVKLYLD.

Belongs to the RxLR effector family.

The protein resides in the secreted. The protein localises to the host cytoplasm. It localises to the host nucleus. It is found in the host nucleolus. Its subcellular location is the host cytoskeleton. In terms of biological role, secreted effector that acts as an elicitor of hypersensitive response (HR) specifically on plants carrying defense protein R4, through its interaction with this protein. The chain is RxLR effector protein Avr4 from Phytophthora mirabilis.